A 129-amino-acid chain; its full sequence is Glycine cleavage system H protein (129 aa).

In terms of domain architecture, Lipoyl-binding spans 24-106; it reads SYTVGISEHA…FGDGWFFRVM (83 aa). Position 65 is an N6-lipoyllysine (K65).

It belongs to the GcvH family. As to quaternary structure, the glycine cleavage system is composed of four proteins: P, T, L and H. The cofactor is (R)-lipoate.

Functionally, the glycine cleavage system catalyzes the degradation of glycine. The H protein shuttles the methylamine group of glycine from the P protein to the T protein. In Shewanella woodyi (strain ATCC 51908 / MS32), this protein is Glycine cleavage system H protein.